Reading from the N-terminus, the 165-residue chain is Phosphopantetheine adenylyltransferase (165 aa).

Residue S9 coordinates substrate. Residues 9–10 (SF) and H17 contribute to the ATP site. Positions 41, 75, and 89 each coordinate substrate. ATP contacts are provided by residues 90 to 92 (GVR), E100, and 125 to 131 (YLFVRSD).

The protein belongs to the bacterial CoaD family. As to quaternary structure, homohexamer. The cofactor is Mg(2+).

The protein resides in the cytoplasm. It catalyses the reaction (R)-4'-phosphopantetheine + ATP + H(+) = 3'-dephospho-CoA + diphosphate. Its pathway is cofactor biosynthesis; coenzyme A biosynthesis; CoA from (R)-pantothenate: step 4/5. Reversibly transfers an adenylyl group from ATP to 4'-phosphopantetheine, yielding dephospho-CoA (dPCoA) and pyrophosphate. The protein is Phosphopantetheine adenylyltransferase of Borrelia hermsii (strain HS1 / DAH).